Consider the following 858-residue polypeptide: ATP-dependent DNA helicase Q-like SIM (858 aa).

Residues 2-44 (DLSSDQLVMKIVEMGFEKLDALEAVKAVGGKSCDDAVEYILKG) enclose the UBA domain. One can recognise a Helicase ATP-binding domain in the interval 177-353 (LSTWVAHKDC…LESLHLSKET (177 aa)). 190–197 (AATGSGKS) contacts ATP. A DEAH box motif is present at residues 288–291 (DEAH). Residues 402-450 (LAVISRESEEQTDFGSHDSENIHETDYDEDEEDQENSLAKKNSSNGKEL) are disordered. Positions 416–426 (GSHDSENIHET) are enriched in basic and acidic residues. The span at 427–436 (DYDEDEEDQE) shows a compositional bias: acidic residues. Over residues 437-448 (NSLAKKNSSNGK) the composition is skewed to polar residues. The region spanning 491–627 (EKQKDLEGLT…QTEQAYKMLS (137 aa)) is the Helicase C-terminal domain. The interval 822–858 (RQRLERRERKPRRERKPRKKRTRGRSSTKLHPWRSKE) is disordered. Residues 830–858 (RKPRRERKPRKKRTRGRSSTKLHPWRSKE) show a composition bias toward basic residues.

Belongs to the helicase family. RecQ subfamily. It depends on Mg(2+) as a cofactor. Mn(2+) is required as a cofactor. Mostly expressed in roots and seedlings, and, to a lower extent, in leaves, shoots, shoot apical mersitem, inflorescences, flowers, siliques and seeds.

It is found in the nucleus. It carries out the reaction Couples ATP hydrolysis with the unwinding of duplex DNA by translocating in the 3'-5' direction.. The enzyme catalyses ATP + H2O = ADP + phosphate + H(+). In terms of biological role, plant specific, probable 3'-5' DNA helicase that may play a role in the repair of DNA. The chain is ATP-dependent DNA helicase Q-like SIM (RECQSIM) from Arabidopsis thaliana (Mouse-ear cress).